The chain runs to 270 residues: 3-methyl-2-oxobutanoate hydroxymethyltransferase (270 aa).

Mg(2+) contacts are provided by D43 and D82. 3-methyl-2-oxobutanoate-binding positions include 43-44, D82, and K112; that span reads DS. E114 contacts Mg(2+). Residue E179 is the Proton acceptor of the active site.

Belongs to the PanB family. Homodecamer; pentamer of dimers. It depends on Mg(2+) as a cofactor.

The protein localises to the cytoplasm. It carries out the reaction 3-methyl-2-oxobutanoate + (6R)-5,10-methylene-5,6,7,8-tetrahydrofolate + H2O = 2-dehydropantoate + (6S)-5,6,7,8-tetrahydrofolate. It participates in cofactor biosynthesis; (R)-pantothenate biosynthesis; (R)-pantoate from 3-methyl-2-oxobutanoate: step 1/2. Its function is as follows. Catalyzes the reversible reaction in which hydroxymethyl group from 5,10-methylenetetrahydrofolate is transferred onto alpha-ketoisovalerate to form ketopantoate. This chain is 3-methyl-2-oxobutanoate hydroxymethyltransferase, found in Staphylococcus carnosus (strain TM300).